A 471-amino-acid polypeptide reads, in one-letter code: Intraflagellar transport protein 46 homolog (471 aa).

Disordered regions lie at residues 1–202 (MSSE…SNMR) and 226–246 (SRLE…EDDD). 2 stretches are compositionally biased toward acidic residues: residues 89 to 99 (SEPQEVIDVND) and 231 to 246 (DSSN…EDDD).

It belongs to the IFT46 family. Component of the IFT complex B composed of at least che-2, che-13, dyf-1, dyf-3, dyf-6, dyf-11, dyf-13, ift-20, ift-74, ift-81, ifta-2, osm-1, osm-5 and osm-6. Expressed in the hypodermis and sensory neurons including inner labial, PDE, amphid and phasmid neurons.

The protein resides in the cell projection. It localises to the cilium. The protein localises to the cytoplasm. It is found in the cytoskeleton. Its subcellular location is the cilium basal body. The protein resides in the dendrite. It localises to the perikaryon. Functionally, component of the intraflagellar transport (IFT) complex B required for transport of proteins in the motile cilium. May be required for ciliary entrance and transport of specific ciliary cargo proteins such as che-3 which are related to motility. Required for normal morphology and function of ciliated amphid sensory neurons. The polypeptide is Intraflagellar transport protein 46 homolog (Caenorhabditis elegans).